We begin with the raw amino-acid sequence, 351 residues long: UDP-N-acetylglucosamine--N-acetylmuramyl-(pentapeptide) pyrophosphoryl-undecaprenol N-acetylglucosamine transferase (351 aa).

Residues 12–14 (TGG), Asn124, Arg160, Ser188, Ile239, 258–263 (ALTVCE), and Gln283 each bind UDP-N-acetyl-alpha-D-glucosamine.

The protein belongs to the glycosyltransferase 28 family. MurG subfamily.

Its subcellular location is the cell inner membrane. The enzyme catalyses di-trans,octa-cis-undecaprenyl diphospho-N-acetyl-alpha-D-muramoyl-L-alanyl-D-glutamyl-meso-2,6-diaminopimeloyl-D-alanyl-D-alanine + UDP-N-acetyl-alpha-D-glucosamine = di-trans,octa-cis-undecaprenyl diphospho-[N-acetyl-alpha-D-glucosaminyl-(1-&gt;4)]-N-acetyl-alpha-D-muramoyl-L-alanyl-D-glutamyl-meso-2,6-diaminopimeloyl-D-alanyl-D-alanine + UDP + H(+). It participates in cell wall biogenesis; peptidoglycan biosynthesis. Its function is as follows. Cell wall formation. Catalyzes the transfer of a GlcNAc subunit on undecaprenyl-pyrophosphoryl-MurNAc-pentapeptide (lipid intermediate I) to form undecaprenyl-pyrophosphoryl-MurNAc-(pentapeptide)GlcNAc (lipid intermediate II). In Actinobacillus pleuropneumoniae serotype 7 (strain AP76), this protein is UDP-N-acetylglucosamine--N-acetylmuramyl-(pentapeptide) pyrophosphoryl-undecaprenol N-acetylglucosamine transferase.